Reading from the N-terminus, the 363-residue chain is MNKLALYCRPGFEKEVAAEITDQASHLGVFGFARVQDNSGYVIFECYQPDEADRLARDIPFNRLIFARQMIVISDLLEDLDPADRISPIVAAFEELSQQVNFAQSSELFVETADTNEAKELSTFCRKFTVPLRQALKKQGWLSAKASQKCGQFLHCFFVKPNCCYVGYSYVDNHSSHFMGIPRLKFPADAPSRSTLKLEEAILTFIPRKEENKRLNENMIGVDLGACPGGWTYQLVKRGLFVYAVDHGKMAANLHDTGRIEHCAEDGFKFQPPKRKKVDWLVCDMVEQPSRISSLIGKWLLNGWCRETIFNLKLPMKKRYQEVILCLENLAVMLAEQNLNFEIQAKHLYHDREEITVHIALKP.

Residues S194, 227–230 (CPGG), D246, D266, and D284 contribute to the S-adenosyl-L-methionine site. Residue K313 is the Proton acceptor of the active site.

Belongs to the class I-like SAM-binding methyltransferase superfamily. RNA methyltransferase RlmE family. RlmM subfamily. As to quaternary structure, monomer.

Its subcellular location is the cytoplasm. It carries out the reaction cytidine(2498) in 23S rRNA + S-adenosyl-L-methionine = 2'-O-methylcytidine(2498) in 23S rRNA + S-adenosyl-L-homocysteine + H(+). Catalyzes the 2'-O-methylation at nucleotide C2498 in 23S rRNA. This chain is Ribosomal RNA large subunit methyltransferase M, found in Haemophilus influenzae (strain PittGG).